The following is a 215-amino-acid chain: L-fuculose phosphate aldolase (215 aa).

Substrate contacts are provided by residues 28-29 (GN), 43-44 (TG), and 71-72 (SS). The active-site Proton donor/acceptor is E73. Positions 73, 92, 94, and 155 each coordinate Zn(2+).

It belongs to the aldolase class II family. AraD/FucA subfamily. As to quaternary structure, homotetramer. Zn(2+) serves as cofactor.

It carries out the reaction L-fuculose 1-phosphate = (S)-lactaldehyde + dihydroxyacetone phosphate. It functions in the pathway carbohydrate degradation; L-fucose degradation; L-lactaldehyde and glycerone phosphate from L-fucose: step 3/3. Functionally, involved in the degradation of L-fucose and D-arabinose. Catalyzes the reversible cleavage of L-fuculose 1-phosphate (Fuc1P) to yield dihydroxyacetone phosphate (DHAP) and L-lactaldehyde. This is L-fuculose phosphate aldolase from Escherichia coli O6:H1 (strain CFT073 / ATCC 700928 / UPEC).